Consider the following 105-residue polypeptide: Large ribosomal subunit protein uL23 (105 aa).

This sequence belongs to the universal ribosomal protein uL23 family. Part of the 50S ribosomal subunit. Contacts protein L29, and trigger factor when it is bound to the ribosome.

Functionally, one of the early assembly proteins it binds 23S rRNA. One of the proteins that surrounds the polypeptide exit tunnel on the outside of the ribosome. Forms the main docking site for trigger factor binding to the ribosome. This is Large ribosomal subunit protein uL23 from Chloroherpeton thalassium (strain ATCC 35110 / GB-78).